The following is a 198-amino-acid chain: Glycerol-3-phosphate acyltransferase (198 aa).

Helical transmembrane passes span 1-21 (MNLLILFFGYLFGSFPSGYLA), 53-73 (IIVFLLDVFKGVLSILLAKYL), 79-99 (WQVAIGLSTLIGHIWPVWLNW), 111-131 (IFLGLSWQVGLATLGVFIIMI), 136-156 (IVSLASVSASLALPLIMFLSF), and 158-178 (GSNISLPFLIVSLLAMLLVIW).

The protein belongs to the PlsY family. In terms of assembly, probably interacts with PlsX.

The protein localises to the cell inner membrane. The enzyme catalyses an acyl phosphate + sn-glycerol 3-phosphate = a 1-acyl-sn-glycero-3-phosphate + phosphate. It functions in the pathway lipid metabolism; phospholipid metabolism. In terms of biological role, catalyzes the transfer of an acyl group from acyl-phosphate (acyl-PO(4)) to glycerol-3-phosphate (G3P) to form lysophosphatidic acid (LPA). This enzyme utilizes acyl-phosphate as fatty acyl donor, but not acyl-CoA or acyl-ACP. The chain is Glycerol-3-phosphate acyltransferase from Prochlorococcus marinus (strain NATL1A).